A 508-amino-acid polypeptide reads, in one-letter code: UDP-N-acetylmuramoyl-L-alanyl-D-glutamate--2,6-diaminopimelate ligase (508 aa).

Ser33 is a binding site for UDP-N-acetyl-alpha-D-muramoyl-L-alanyl-D-glutamate. An ATP-binding site is contributed by 121–127; that stretch reads GTNGKST. UDP-N-acetyl-alpha-D-muramoyl-L-alanyl-D-glutamate contacts are provided by residues Asn162, 163-164, Ser190, Gln196, and Arg198; that span reads TT. Position 230 is an N6-carboxylysine (Lys230). Residues Arg399, 423-426, Gly474, and Glu478 each bind meso-2,6-diaminopimelate; that span reads DNPR. The Meso-diaminopimelate recognition motif motif lies at 423 to 426; sequence DNPR.

Belongs to the MurCDEF family. MurE subfamily. Requires Mg(2+) as cofactor. In terms of processing, carboxylation is probably crucial for Mg(2+) binding and, consequently, for the gamma-phosphate positioning of ATP.

The protein localises to the cytoplasm. It catalyses the reaction UDP-N-acetyl-alpha-D-muramoyl-L-alanyl-D-glutamate + meso-2,6-diaminopimelate + ATP = UDP-N-acetyl-alpha-D-muramoyl-L-alanyl-gamma-D-glutamyl-meso-2,6-diaminopimelate + ADP + phosphate + H(+). The protein operates within cell wall biogenesis; peptidoglycan biosynthesis. Its function is as follows. Catalyzes the addition of meso-diaminopimelic acid to the nucleotide precursor UDP-N-acetylmuramoyl-L-alanyl-D-glutamate (UMAG) in the biosynthesis of bacterial cell-wall peptidoglycan. This chain is UDP-N-acetylmuramoyl-L-alanyl-D-glutamate--2,6-diaminopimelate ligase, found in Buchnera aphidicola subsp. Baizongia pistaciae (strain Bp).